Consider the following 396-residue polypeptide: F-box protein At2g21930 (396 aa).

The F-box domain maps to 19-65 (SGNSVQIPFDLIPEILKRLPVKTLARFLSVSKEYTSIIRNRDFMKSY).

This Arabidopsis thaliana (Mouse-ear cress) protein is F-box protein At2g21930.